The chain runs to 289 residues: 33 kDa chaperonin (289 aa).

2 disulfide bridges follow: Cys-229–Cys-231 and Cys-262–Cys-265.

It belongs to the HSP33 family. In terms of processing, under oxidizing conditions two disulfide bonds are formed involving the reactive cysteines. Under reducing conditions zinc is bound to the reactive cysteines and the protein is inactive.

It localises to the cytoplasm. Functionally, redox regulated molecular chaperone. Protects both thermally unfolding and oxidatively damaged proteins from irreversible aggregation. Plays an important role in the bacterial defense system toward oxidative stress. This is 33 kDa chaperonin from Pectobacterium atrosepticum (strain SCRI 1043 / ATCC BAA-672) (Erwinia carotovora subsp. atroseptica).